We begin with the raw amino-acid sequence, 84 residues long: Tripartite terminase subunit 2 (84 aa).

It belongs to the herpesviridae TRM2 protein family. Associates with TRM1 and TRM3 to form the tripartite terminase complex.

The protein localises to the host nucleus. Functionally, component of the molecular motor that translocates viral genomic DNA in empty capsid during DNA packaging. Forms a tripartite terminase complex together with TRM1 and TRM3 in the host cytoplasm. Once the complex reaches the host nucleus, it interacts with the capsid portal vertex. This portal forms a ring in which genomic DNA is translocated into the capsid. This is Tripartite terminase subunit 2 from Alcelaphine herpesvirus 1 (strain C500) (AlHV-1).